A 130-amino-acid chain; its full sequence is Protein lgg-2 (130 aa).

A lipid anchor (Phosphatidylethanolamine amidated glycine) is attached at glycine 130.

It belongs to the ATG8 family. In terms of assembly, may interact with vps-39. Interacts with lgg-3; the interaction is direct. Interacts with atg-16.1 (via WD domain) and atg-16.2 (via WD 5-6 repeats); the interactions are direct. Interacts with sepa-1 (via the LIR motifs); the interaction is direct. Interacts with sqst-1 (via the LIR motifs); the interaction is direct. Interacts with epg-2 (via the LIR motifs); the interaction is weak. Interacts with atg-7; the interaction is direct. Interacts with atg-3. The interaction with atg-7 and atg-3 may be required for the lipidation of lgg-2. Post-translationally, this protein is subject to lipidation. Lipidation is regulated by lgg-1.

The protein localises to the cytoplasmic vesicle. It localises to the autophagosome. Its subcellular location is the cytoplasm. The protein resides in the cell membrane. Ubiquitin-like modifier involved in the formation of autophagosomal vacuoles (autophagosomes). When lipidated mediates tethering between adjacent membranes and stimulates membrane fusion. Less effective at promoting membrane fusion than lgg-1. Acts upstream of the autophagy protein epg-5 in the aggrephagy pathway, which is the macroautophagic degradation of ubiquitinated protein aggregates, and preferentially interacts with autophagy proteins and substrates containing LIR motifs to mediate autophagosome formation and protein aggregate degradation. In particular binds to components of an atg-5-lgg-3-atg-16 complex to regulate autophagosome formation and cargo sequestration. Required for the degradation of specific sqst-1-containing aggregates during embryogenesis and the early stages of larval development. Involved in allophagy, which is an autophagic process in which paternal mitochondria and organelles are degraded during fertilization, and moreover is required for the degradation of lgg-1-positive allophagic autophagosomes in embryos. Involved in xenophagy, the autophagy-mediated degradation of pathogens and pathogen products, such as toxins. Also plays a role in membrane-pore repair. Through HOPS complex subunit vps-39, tethers lysosomes with autophagosomes to form autolysosomes. Plays a role in the distribution and clearance of germ cell specific P-granules from somatic cells to ensure exclusive localization of the P-granules in germ cells. Essential for dauer development and life-span extension. The protein is Protein lgg-2 of Caenorhabditis elegans.